We begin with the raw amino-acid sequence, 1076 residues long: Envelopment polyprotein (1076 aa).

A signal peptide spans 1–18 (MIVPIVLFLTLCPSELSA). Over 19–455 (WGSPGDPIVC…NPQCYPVKKW (437 aa)) the chain is Lumenal. 9 disulfides stabilise this stretch: Cys-28–Cys-51, Cys-145–Cys-158, Cys-182–Cys-329, Cys-208–Cys-218, Cys-260–Cys-307, Cys-289–Cys-294, Cys-351–Cys-354, Cys-358–Cys-426, and Cys-378–Cys-383. Residues 456-476 (LFLVVVIMCCYCALMLLTNIL) form a helical membrane-spanning segment. The interval 477–523 (RAIGVWGTWVFAPIKLALALGLRLAKLSKKGLVAVVTRGQMIVNDEL) is golgi retention signal. Residues 477 to 539 (RAIGVWGTWV…RGEQNEGRQG (63 aa)) are Cytoplasmic-facing. The tract at residues 544 to 566 (GPIRHWLYSPALILILTTSICSG) is internal signal sequence for glycoprotein C. 10 disulfide bridges follow: Cys-567-Cys-608, Cys-580-Cys-590, Cys-633-Cys-729, Cys-648-Cys-845, Cys-654-Cys-702, Cys-660-Cys-709, Cys-664-Cys-691, Cys-695-Cys-700, Cys-782-Cys-797, and Cys-813-Cys-827. Topologically, residues 567–1040 (CDELVHAESK…ALFGDGITRW (474 aa)) are lumenal. Residues 654-660 (CRWAGDC) are fusion loop. Residues 695-709 (CGGAACGCFNAAPSC) form a fusion loop region. N-linked (GlcNAc...) asparagine; by host glycosylation is found at Asn-857 and Asn-918. Cystine bridges form between Cys-912-Cys-982 and Cys-922-Cys-925. Asn-940 carries an N-linked (GlcNAc...) asparagine; by host glycan. The helical transmembrane segment at 1041–1061 (ILGIIGVLLACVMLFVVVVAI) threads the bilayer. At 1062–1076 (TRRLIKGLTQRAKVA) the chain is on the cytoplasmic side.

The protein belongs to the phlebovirus envelope glycoprotein family. In terms of assembly, heterodimer with glycoprotein C. Heterodimer with glycoprotein N. Homotrimer (postfusion). Post-translationally, specific enzymatic cleavages in vivo yield mature proteins Glycoprotein C, and Glycoprotein N. Glycosylated. In terms of processing, palmitoylated.

The protein localises to the virion membrane. It is found in the host Golgi apparatus membrane. The protein resides in the host endoplasmic reticulum membrane. In terms of biological role, structural component of the virion that interacts with glycoprotein C. It shields the hydrophobic fusion loops of the glycoprotein C, preventing premature fusion. The glycoprotein protrusions are arranged on an icosahedral lattice, with T=12 triangulation. They are able to attach the virion to the host cell receptor CD209/DC-SIGN and to promote fusion of membranes with the late endosome after endocytosis of the virion. Plays a role in the packaging of ribonucleoproteins during virus assembly. Functionally, structural component of the virion that interacts with glycoprotein N. Acts as a class II fusion protein that is activated upon acidification and subsequent repositioning of the glycoprotein N. The glycoprotein protrusions are arranged on an icosahedral lattice, with T=12 triangulation. They are able to attach the virion to the host cell receptor CD209/DC-SIGN and to promote fusion of membranes with the late endosome after endocytosis of the virion. The protein is Envelopment polyprotein (GP) of Alces americanus (American moose).